The chain runs to 296 residues: Coiled-coil domain-containing protein 69 (296 aa).

A compositionally biased stretch (basic residues) spans 1 to 18 (MGCRHSRLSSCKPPKKKR). A disordered region spans residues 1 to 41 (MGCRHSRLSSCKPPKKKRQEPEPEQPPRPEPHELGPLNGDT). The N-myristoyl glycine moiety is linked to residue Gly-2. Over residues 19–33 (QEPEPEQPPRPEPHE) the composition is skewed to basic and acidic residues. The stretch at 48–272 (CASEEAERHQ…QEKEELLYRV (225 aa)) forms a coiled coil. Ser-154 and Ser-241 each carry phosphoserine.

Belongs to the CCDC69 family. Highly expressed in duodenum, esophagus, pancreas, prostate, salivary gland, thymus and urinary bladder.

The protein resides in the cytoplasm. It localises to the cytoskeleton. The protein localises to the spindle. It is found in the midbody. In terms of biological role, may act as a scaffold to regulate the recruitment and assembly of spindle midzone components. Required for the localization of AURKB and PLK1 to the spindle midzone. The polypeptide is Coiled-coil domain-containing protein 69 (Homo sapiens (Human)).